Consider the following 340-residue polypeptide: MSSAAQQQQKAAAAEQEEVEHGPFPIEQLQASGIAALDVKKLKDSGLHTVEAVAYTPRKDLLQIKGISEAKADKIIEAASKIVPLGFTSASQLHAQRLEIIQVTTGSRELDKILEGGIETGSITEIYGEFRSGKTQLCHTPCVTCQLPLDQGGGEGKALYIDAEGTFRPQRLLQIADRFGLNGADVLENVAYARAYNTDHQSRLLLEAASMMIETRFALMVVDSATALYRTDFSGRGELSARQMHMAKFLRSLQKLADEFGVAVVITNQVVAQVDGSAMFAGPQFKPIGGNIMAHASTTRLALRKGRGEERICKVISSPCLAEAEARFQLASEGIADVKD.

The segment covering Met-1 to Ala-14 has biased composition (low complexity). The tract at residues Met-1–His-21 is disordered. One can recognise a HhH domain in the interval Thr-49 to Ala-78. An ATP-binding site is contributed by Gly-128–Thr-135.

This sequence belongs to the RecA family. RAD51 subfamily. As to quaternary structure, self-associates and may interact with XRCC3 homolog. In terms of tissue distribution, highly expressed in mitotic and meiotic tissues, but low levels in differentiated tissues.

It localises to the nucleus. In terms of biological role, binds to single and double-stranded DNA and exhibits DNA-dependent ATPase activity. Unwinds duplex DNA. Component of the meiotic recombination pathway. Seems to play a role in mediating chromosome homology search, chromosome pairing and synapsis at early stages and probably chromosome crossing-over at later stages in meiosis. Probably is involved in the repair of meiotic double strand breaks (DBSs) and in homologous recombination. This chain is DNA repair protein RAD51 homolog A (RAD51A), found in Zea mays (Maize).